The chain runs to 338 residues: 3-dehydroquinate synthase (338 aa).

Residues 58–63 (DGERAK), 92–96 (GTTGD), 116–117 (TT), K129, and K138 each bind NAD(+). Residues E169, H229, and H245 each coordinate Zn(2+).

This sequence belongs to the sugar phosphate cyclases superfamily. Dehydroquinate synthase family. The cofactor is NAD(+). It depends on Co(2+) as a cofactor. Zn(2+) serves as cofactor.

The protein resides in the cytoplasm. The catalysed reaction is 7-phospho-2-dehydro-3-deoxy-D-arabino-heptonate = 3-dehydroquinate + phosphate. It participates in metabolic intermediate biosynthesis; chorismate biosynthesis; chorismate from D-erythrose 4-phosphate and phosphoenolpyruvate: step 2/7. Functionally, catalyzes the conversion of 3-deoxy-D-arabino-heptulosonate 7-phosphate (DAHP) to dehydroquinate (DHQ). The protein is 3-dehydroquinate synthase of Picrophilus torridus (strain ATCC 700027 / DSM 9790 / JCM 10055 / NBRC 100828 / KAW 2/3).